The chain runs to 491 residues: Probable malate:quinone oxidoreductase (491 aa).

Belongs to the MQO family. It depends on FAD as a cofactor.

It carries out the reaction (S)-malate + a quinone = a quinol + oxaloacetate. It functions in the pathway carbohydrate metabolism; tricarboxylic acid cycle; oxaloacetate from (S)-malate (quinone route): step 1/1. The sequence is that of Probable malate:quinone oxidoreductase from Leifsonia xyli subsp. xyli (strain CTCB07).